The chain runs to 148 residues: Lysozyme-like protein 6 (148 aa).

Positions M1–G19 are cleaved as a signal peptide. A C-type lysozyme domain is found at N20–G148. Disulfide bonds link C25–C145, C49–C133, C83–C98, and C94–C112. The active site involves E54. Residue N58 is glycosylated (N-linked (GlcNAc...) asparagine). Residue D71 is part of the active site.

Belongs to the glycosyl hydrolase 22 family. In terms of assembly, monomer. As to expression, expressed strongly in testis and epididymis and weakly in seminal vesicle, vas deferens, kidney and spleen. Highly expressed in primary spermatocytes and round spermatids (at protein level).

Its subcellular location is the secreted. The protein localises to the cell surface. The protein resides in the cell projection. It is found in the cilium. It localises to the flagellum. It carries out the reaction Hydrolysis of (1-&gt;4)-beta-linkages between N-acetylmuramic acid and N-acetyl-D-glucosamine residues in a peptidoglycan and between N-acetyl-D-glucosamine residues in chitodextrins.. In terms of biological role, may be involved sperm-egg plasma membrane adhesion and fusion during fertilization. Exhibits bacteriolytic activity in vitro against Micrococcus luteus and Staphylococcus aureus. Shows weak bacteriolytic activity against Gram-positive bacteria at physiological pH. Bacteriolytic activity is pH-dependent, with a maximum at around pH 5.6. This chain is Lysozyme-like protein 6 (Lyzl6), found in Mus musculus (Mouse).